The chain runs to 424 residues: GTPase Obg (424 aa).

In terms of domain architecture, Obg spans 1–158; the sequence is MFIDTAKIFV…RWIKLELKLL (158 aa). An OBG-type G domain is found at 159-331; that stretch reads ADVGLIGFPN…LMKEAARLLS (173 aa). GTP contacts are provided by residues 165–172, 190–194, 212–215, 282–285, and 312–314; these read GFPNVGKS, FTTLK, DIPG, NKSD, and SAA. Mg(2+) contacts are provided by S172 and T192. Positions 345–424 constitute an OCT domain; the sequence is RFIEEEKRFT…LNDFEFDFLL (80 aa).

Belongs to the TRAFAC class OBG-HflX-like GTPase superfamily. OBG GTPase family. As to quaternary structure, monomer. Mg(2+) serves as cofactor.

The protein resides in the cytoplasm. Functionally, an essential GTPase which binds GTP, GDP and possibly (p)ppGpp with moderate affinity, with high nucleotide exchange rates and a fairly low GTP hydrolysis rate. Plays a role in control of the cell cycle, stress response, ribosome biogenesis and in those bacteria that undergo differentiation, in morphogenesis control. The protein is GTPase Obg of Clostridium botulinum (strain ATCC 19397 / Type A).